We begin with the raw amino-acid sequence, 356 residues long: DNA-directed RNA polymerase subunit alpha (356 aa).

Residues Met1–Leu259 form an alpha N-terminal domain (alpha-NTD) region. The segment at Phe277–Asp356 is alpha C-terminal domain (alpha-CTD).

It belongs to the RNA polymerase alpha chain family. In terms of assembly, in plastids the minimal PEP RNA polymerase catalytic core is composed of four subunits: alpha, beta, beta', and beta''. When a (nuclear-encoded) sigma factor is associated with the core the holoenzyme is formed, which can initiate transcription.

Its subcellular location is the plastid. The protein localises to the chloroplast. It catalyses the reaction RNA(n) + a ribonucleoside 5'-triphosphate = RNA(n+1) + diphosphate. Functionally, DNA-dependent RNA polymerase catalyzes the transcription of DNA into RNA using the four ribonucleoside triphosphates as substrates. The chain is DNA-directed RNA polymerase subunit alpha from Ostreococcus tauri.